Reading from the N-terminus, the 403-residue chain is Argininosuccinate synthase (403 aa).

10–18 (AYSGGLDTS) is a binding site for ATP. L-citrulline-binding residues include Tyr-88 and Ser-93. ATP is bound at residue Gly-118. L-aspartate contacts are provided by Thr-120, Asn-124, and Asp-125. Asn-124 lines the L-citrulline pocket. L-citrulline is bound by residues Arg-128, Ser-177, Ser-186, Glu-263, and Tyr-275.

This sequence belongs to the argininosuccinate synthase family. Type 1 subfamily. Homotetramer.

The protein resides in the cytoplasm. It catalyses the reaction L-citrulline + L-aspartate + ATP = 2-(N(omega)-L-arginino)succinate + AMP + diphosphate + H(+). It participates in amino-acid biosynthesis; L-arginine biosynthesis; L-arginine from L-ornithine and carbamoyl phosphate: step 2/3. This Clostridium perfringens (strain ATCC 13124 / DSM 756 / JCM 1290 / NCIMB 6125 / NCTC 8237 / Type A) protein is Argininosuccinate synthase.